The primary structure comprises 403 residues: Chalcone synthase 2 (403 aa).

Arg-59–Ser-66 contributes to the CoA binding site. The active-site Acyl-thioester intermediate is the Cys-168. Substrate is bound at residue Gly-220–Asp-221. Ala-313 contributes to the CoA binding site.

The protein belongs to the thiolase-like superfamily. Chalcone/stilbene synthases family. In terms of assembly, homodimer.

It catalyses the reaction (E)-4-coumaroyl-CoA + 3 malonyl-CoA + 3 H(+) = 2',4,4',6'-tetrahydroxychalcone + 3 CO2 + 4 CoA. It functions in the pathway secondary metabolite biosynthesis; flavonoid biosynthesis. Its function is as follows. The primary product of this enzyme is 4,2',4',6'-tetrahydroxychalcone (also termed naringenin-chalcone or chalcone) which can under specific conditions spontaneously isomerize into naringenin. This Oryza sativa subsp. japonica (Rice) protein is Chalcone synthase 2 (CHS2).